Reading from the N-terminus, the 2256-residue chain is Death-inducer obliterator 1 (2256 aa).

At methionine 1 the chain carries N-acetylmethionine. The segment covering methionine 1 to lysine 25 has biased composition (basic and acidic residues). Positions methionine 1–proline 256 are disordered. Composition is skewed to polar residues over residues serine 48 to leucine 59 and glutamate 96 to isoleucine 119. Residues serine 58 and serine 112 each carry the phosphoserine modification. Residues leucine 128–glycine 142 show a composition bias toward basic and acidic residues. Over residues glutamate 143–serine 153 the composition is skewed to acidic residues. Threonine 148 carries the post-translational modification Phosphothreonine. Phosphoserine is present on residues serine 149 and serine 151. 2 short sequence motifs (nuclear localization signal) span residues glutamine 162–glutamate 170 and glutamine 182–arginine 190. The segment covering arginine 169–leucine 178 has biased composition (basic and acidic residues). 2 stretches are compositionally biased toward basic and acidic residues: residues glutamate 206–proline 216 and glutamate 246–proline 256. The PHD-type zinc-finger motif lies at alanine 265–leucine 319. 7 disordered regions span residues leucine 481–arginine 535, arginine 598–lysine 624, alanine 641–arginine 668, serine 778–serine 822, glutamine 856–serine 970, alanine 1011–glycine 1039, and proline 1197–leucine 1218. Polar residues predominate over residues glutamate 495–asparagine 506. Serine 522 bears the Phosphoserine mark. A TFIIS central domain is found at isoleucine 667–lysine 787. The segment covering serine 778–lysine 788 has biased composition (basic and acidic residues). Residues proline 797–glutamine 812 show a composition bias toward acidic residues. A phosphoserine mark is found at serine 802 and serine 806. Composition is skewed to basic and acidic residues over residues serine 875–serine 886 and glutamine 921–proline 935. Lysine 876 is covalently cross-linked (Glycyl lysine isopeptide (Lys-Gly) (interchain with G-Cter in SUMO2)). Serine 886 bears the Phosphoserine mark. The segment covering proline 937–glycine 962 has biased composition (low complexity). Phosphoserine is present on residues serine 1016, serine 1027, and serine 1035. Residues glutamate 1202–glutamine 1215 are compositionally biased toward basic and acidic residues. Residue tyrosine 1239 is modified to Phosphotyrosine. A disordered region spans residues aspartate 1245–threonine 1288. Position 1252 is a phosphothreonine (threonine 1252). A compositionally biased stretch (pro residues) spans proline 1254–proline 1267. Serine 1256 carries the phosphoserine modification. Positions serine 1279–threonine 1288 are enriched in low complexity. Serine 1307 is subject to Phosphoserine. Disordered regions lie at residues lysine 1320–aspartate 1347, phenylalanine 1362–aspartate 1421, serine 1509–glutamate 1609, and glutamine 1630–alanine 2256. Acidic residues predominate over residues leucine 1371–tyrosine 1387. Serine 1514 bears the Phosphoserine mark. A compositionally biased stretch (polar residues) spans leucine 1526–asparagine 1546. The span at leucine 1547–glutamine 1557 shows a compositional bias: basic and acidic residues. Residues proline 1649 to leucine 1666 show a composition bias toward low complexity. Pro residues predominate over residues proline 1667–proline 1679. The span at threonine 1699–tyrosine 1712 shows a compositional bias: polar residues. Residue serine 1726 is modified to Phosphoserine. The span at phenylalanine 1783–proline 1792 shows a compositional bias: pro residues. At arginine 1848 the chain carries Omega-N-methylarginine. Residues phenylalanine 1855–glutamine 1869 show a composition bias toward basic and acidic residues. Residues arginine 1904, arginine 1905, arginine 1988, arginine 1993, arginine 2004, arginine 2019, and arginine 2035 each carry the asymmetric dimethylarginine modification. 2 stretches are compositionally biased toward basic and acidic residues: residues glutamate 2081–aspartate 2113 and arginine 2123–threonine 2246.

As to quaternary structure, interacts specifically (via PHD-type zinc finger) with histone H3 that is trimethylated at 'Lys-4' (H3K4me3), histone phosphorylation at 'Thr-3' or 'Thr-6' disrupts this binding and promotes translocation of DIDO1 from chromatin to the mitotic spindle during mitosis. As to expression, ubiquitous. Expressed at intermediate levels.

The protein localises to the cytoplasm. It localises to the nucleus. The protein resides in the cytoskeleton. Its subcellular location is the spindle. Its function is as follows. Required for early embryonic stem cell development. Putative transcription factor, weakly pro-apoptotic when overexpressed. The sequence is that of Death-inducer obliterator 1 (Dido1) from Mus musculus (Mouse).